A 75-amino-acid polypeptide reads, in one-letter code: uncharacterized protein (75 aa).

The first 18 residues, Met-1 to Ala-18, serve as a signal peptide directing secretion.

This is an uncharacterized protein from Treponema pallidum (strain Nichols).